Reading from the N-terminus, the 1052-residue chain is Fibroblast growth factor receptor homolog 2 (1052 aa).

The signal sequence occupies residues 1–19 (MAKVPITLVMIIAIVSAAA). The Extracellular portion of the chain corresponds to 20 to 600 (DLGCDYGHHR…EIYALLHAHP (581 aa)). Ig-like C2-type domains are found at residues 23 to 117 (CDYG…IASF), 124 to 230 (PALP…PTQL), and 240 to 340 (PMLK…RTVA). C30 and C90 are joined by a disulfide. N-linked (GlcNAc...) asparagine glycosylation is found at N99, N137, N175, N181, N249, and N257. An intrachain disulfide couples C164 to C217. C262 and C329 form a disulfide bridge. The segment covering 358-372 (TTTTTVASPIPTAST) has biased composition (low complexity). Positions 358–393 (TTTTTVASPIPTASTGEDNDDDVENPAAEASGGVGP) are disordered. Ig-like C2-type domains lie at 393-478 (PPVF…FSVQ) and 487-585 (PIIV…RVVS). An intrachain disulfide couples C416 to C462. 9 N-linked (GlcNAc...) asparagine glycosylation sites follow: N423, N444, N494, N500, N526, N541, N546, N555, and N576. A disulfide bridge connects residues C507 and C566. Residues 601-626 (LGFTLAAITIVALFLLGSAFITFMLR) traverse the membrane as a helical segment. At 627–1052 (RLRREKLLKL…LRYQYTYKFN (426 aa)) the chain is on the cytoplasmic side. The Protein kinase domain occupies 712 to 1000 (LSLGSILGEG…ELVESFDGIL (289 aa)). ATP contacts are provided by residues 718–726 (LGEGAFGRV) and K748. D864 serves as the catalytic Proton acceptor. Y895 carries the post-translational modification Phosphotyrosine; by autocatalysis. The interval 1017 to 1038 (PMLETPPSSGDEDDGSDTETFR) is disordered.

Belongs to the protein kinase superfamily. Tyr protein kinase family. Fibroblast growth factor receptor subfamily. During embryogenesis, expression is seen in mesoderm, endodermal precursor cells, CNS midline cells and trachea and salivary duct ectodermal cells.

It is found in the membrane. The catalysed reaction is L-tyrosyl-[protein] + ATP = O-phospho-L-tyrosyl-[protein] + ADP + H(+). May be required for patterning of muscle precursor cells: generation of mesodermal and endodermal layers, invaginations of various types of cells, and CNS formation. Essential for the ability of the migrating tracheal and midline cells to recognize external guiding cues. The sequence is that of Fibroblast growth factor receptor homolog 2 (btl) from Drosophila melanogaster (Fruit fly).